Consider the following 164-residue polypeptide: Crossover junction endodeoxyribonuclease RuvC (164 aa).

Residues D7, E67, and D140 contribute to the active site. Residues D7, E67, and D140 each coordinate Mg(2+).

It belongs to the RuvC family. Homodimer which binds Holliday junction (HJ) DNA. The HJ becomes 2-fold symmetrical on binding to RuvC with unstacked arms; it has a different conformation from HJ DNA in complex with RuvA. In the full resolvosome a probable DNA-RuvA(4)-RuvB(12)-RuvC(2) complex forms which resolves the HJ. Mg(2+) serves as cofactor.

The protein resides in the cytoplasm. The catalysed reaction is Endonucleolytic cleavage at a junction such as a reciprocal single-stranded crossover between two homologous DNA duplexes (Holliday junction).. Functionally, the RuvA-RuvB-RuvC complex processes Holliday junction (HJ) DNA during genetic recombination and DNA repair. Endonuclease that resolves HJ intermediates. Cleaves cruciform DNA by making single-stranded nicks across the HJ at symmetrical positions within the homologous arms, yielding a 5'-phosphate and a 3'-hydroxyl group; requires a central core of homology in the junction. The consensus cleavage sequence is 5'-(A/T)TT(C/G)-3'. Cleavage occurs on the 3'-side of the TT dinucleotide at the point of strand exchange. HJ branch migration catalyzed by RuvA-RuvB allows RuvC to scan DNA until it finds its consensus sequence, where it cleaves and resolves the cruciform DNA. In Pelotomaculum thermopropionicum (strain DSM 13744 / JCM 10971 / SI), this protein is Crossover junction endodeoxyribonuclease RuvC.